We begin with the raw amino-acid sequence, 393 residues long: GDP-4-keto-6-deoxy-D-mannose 3-dehydratase (393 aa).

30 to 33 serves as a coordination point for GDP-4-dehydro-alpha-D-rhamnose; sequence NMFT. The helical transmembrane segment at 53–73 threads the bilayer; the sequence is YSVMVSSGSTANLLMIAALFF. Pyridoxal 5'-phosphate is bound by residues 60–61, Trp-92, Glu-166, and Ser-187; that span reads GS. His-192 serves as the catalytic Proton donor/acceptor. Position 219 (His-219) interacts with L-glutamate. Arg-223 is a binding site for GDP-4-dehydro-alpha-D-rhamnose. Asn-252 serves as a coordination point for pyridoxal 5'-phosphate. Arg-254 serves as a coordination point for L-glutamate. Glu-333 contacts GDP-4-dehydro-alpha-D-rhamnose.

Belongs to the DegT/DnrJ/EryC1 family. As to quaternary structure, homodimer. Pyridoxal 5'-phosphate serves as cofactor.

Its subcellular location is the cell membrane. The enzyme catalyses GDP-4-dehydro-alpha-D-rhamnose + L-glutamate = GDP-4-dehydro-3,6-dideoxy-alpha-D-mannose + 2-oxoglutarate + NH4(+). It functions in the pathway nucleotide-sugar metabolism; GDP-L-colitose biosynthesis. Functionally, involved in the biosynthesis of L-colitose, a 3,6-dideoxyhexose present in the O-antigen region of lipopolysaccharides (LPS), where it serves as an antigenic determinant and is vital for bacterial defense and survival. Catalyzes the removal of the C3'-hydroxyl group from GDP-4-keto-6-deoxy-D-mannose via a combined transamination-deoxygenation reaction. The catalysis is initiated by a transamination step in which pyridoxal 5'-phosphate (PLP) is converted to pyridoxamine 5'-phosphate (PMP) in the presence of L-glutamate. This coenzyme then forms a Schiff base with GDP-4-keto-6-deoxy-D-mannose and the resulting adduct undergoes a PMP-mediated beta-dehydration reaction to give a sugar enamine intermediate, which after tautomerization and hydrolysis to release ammonia yields GDP-4-keto-3,6-dideoxy-D-mannose as a product. This is GDP-4-keto-6-deoxy-D-mannose 3-dehydratase from Yersinia pseudotuberculosis.